We begin with the raw amino-acid sequence, 68 residues long: Conotoxin Pu5.5 (68 aa).

The first 22 residues, Met-1 to Ala-22, serve as a signal peptide directing secretion. A propeptide spanning residues Arg-23 to Arg-49 is cleaved from the precursor.

It belongs to the conotoxin T superfamily. Contains 2 disulfide bonds that can be either 'C1-C3, C2-C4' or 'C1-C4, C2-C3', since these disulfide connectivities have been observed for conotoxins with cysteine framework V (for examples, see AC P0DQQ7 and AC P81755). Expressed by the venom duct.

The protein resides in the secreted. This chain is Conotoxin Pu5.5, found in Conus pulicarius (Flea-bitten cone).